Reading from the N-terminus, the 542-residue chain is Glucans biosynthesis protein G (542 aa).

An N-terminal signal peptide occupies residues 1 to 34; the sequence is MVSLLRCPSSKPYSSLICSLTLGAVVALSGVAYA.

This sequence belongs to the OpgD/OpgG family.

The protein resides in the periplasm. The protein operates within glycan metabolism; osmoregulated periplasmic glucan (OPG) biosynthesis. Its function is as follows. Involved in the biosynthesis of osmoregulated periplasmic glucans (OPGs). This is Glucans biosynthesis protein G from Shewanella baltica (strain OS155 / ATCC BAA-1091).